The chain runs to 437 residues: Glutamate-1-semialdehyde 2,1-aminomutase (437 aa).

Position 279 is an N6-(pyridoxal phosphate)lysine (Lys279).

It belongs to the class-III pyridoxal-phosphate-dependent aminotransferase family. HemL subfamily. As to quaternary structure, homodimer. The cofactor is pyridoxal 5'-phosphate.

The protein resides in the cytoplasm. It carries out the reaction (S)-4-amino-5-oxopentanoate = 5-aminolevulinate. It functions in the pathway porphyrin-containing compound metabolism; protoporphyrin-IX biosynthesis; 5-aminolevulinate from L-glutamyl-tRNA(Glu): step 2/2. The polypeptide is Glutamate-1-semialdehyde 2,1-aminomutase (Sorangium cellulosum (strain So ce56) (Polyangium cellulosum (strain So ce56))).